Reading from the N-terminus, the 433-residue chain is Dihydrolipoyllysine-residue acetyltransferase component of pyruvate dehydrogenase complex (433 aa).

A Lipoyl-binding domain is found at 2-77 (AFEFRLPDIG…VVGDVIVKID (76 aa)). K43 carries the post-translational modification N6-lipoyllysine. Disordered regions lie at residues 80 to 134 (DAEE…PSVR) and 164 to 204 (YLNG…FPET). Basic and acidic residues-rich tracts occupy residues 84 to 103 (MQFK…KEQE) and 117 to 126 (EKTEVDESKT). The Peripheral subunit-binding (PSBD) domain occupies 128 to 165 (KAMPSVRKYARENGVNIKAVNGSGKNGRITKEDIDAYL). The segment covering 166–188 (NGGSSEEGSNTSVASESTSSDVV) has biased composition (low complexity). The active site involves H404.

Belongs to the 2-oxoacid dehydrogenase family. In terms of assembly, forms a 24-polypeptide structural core with octahedral symmetry. (R)-lipoate serves as cofactor.

The catalysed reaction is N(6)-[(R)-dihydrolipoyl]-L-lysyl-[protein] + acetyl-CoA = N(6)-[(R)-S(8)-acetyldihydrolipoyl]-L-lysyl-[protein] + CoA. Functionally, the pyruvate dehydrogenase complex catalyzes the overall conversion of pyruvate to acetyl-CoA and CO(2). It contains multiple copies of three enzymatic components: pyruvate dehydrogenase (E1), dihydrolipoamide acetyltransferase (E2) and lipoamide dehydrogenase (E3). In Staphylococcus epidermidis (strain ATCC 12228 / FDA PCI 1200), this protein is Dihydrolipoyllysine-residue acetyltransferase component of pyruvate dehydrogenase complex (pdhC).